Consider the following 245-residue polypeptide: MTLTLLPAVDVADGLAVRLVQGEAGTETSYGDPREAALAWQRDGAEWIHLVDLDAAFGRGSNRDLIAEVVRSVDVAVELSGGIRDDDSLDAALATGAARVNIGTAALEDPEWVRKAIDRVGDRIAVGLDVRGTTLAARGWTREGGELYEVLARLDADGCARYVLTDVRRDGTLTGPNVELLRAVTAATTRPVVASGGVSSLEDLRVIATVPGVEGAIVGKALYAGAFTLPEALAVAAEVPAAGAP.

Catalysis depends on Asp10, which acts as the Proton acceptor. The active-site Proton donor is Asp129.

The protein belongs to the HisA/HisF family.

The protein resides in the cytoplasm. It catalyses the reaction 1-(5-phospho-beta-D-ribosyl)-5-[(5-phospho-beta-D-ribosylamino)methylideneamino]imidazole-4-carboxamide = 5-[(5-phospho-1-deoxy-D-ribulos-1-ylimino)methylamino]-1-(5-phospho-beta-D-ribosyl)imidazole-4-carboxamide. It participates in amino-acid biosynthesis; L-histidine biosynthesis; L-histidine from 5-phospho-alpha-D-ribose 1-diphosphate: step 4/9. The polypeptide is 1-(5-phosphoribosyl)-5-[(5-phosphoribosylamino)methylideneamino] imidazole-4-carboxamide isomerase (Parafrankia sp. (strain EAN1pec)).